The sequence spans 532 residues: uncharacterized protein (532 aa).

Helical transmembrane passes span 7–26 (HSSYFSLFLIVALGFMLGRI), 30–52 (GLSLDVSAVIFIALLFGHFGVII), 59–77 (FGLVLFIFTIGIQAGPGFF), 87–109 (LILITMLIICSACLTAVGLKYAF), 116–134 (VVGLIAGALTSTPGLAVAI), and 139–161 (SPLASIAYGIAYPFGVIGVILFV). RCK C-terminal domains lie at 179 to 262 (LEIE…LIGE) and 263 to 346 (REEG…LLGN). A run of 6 helical transmembrane segments spans residues 356–376 (FFPIAMGIVLGVLFGKLNISF), 386–408 (LTGGVLMVALVLSAVGKTGPIIW), 421–440 (LGLLLFLAEVGTSAGKNLVA), 445–467 (SGLLMFGVGAAITVVPMLVAVIV), 474–496 (INILDLLGTITGGMTSTPGLAAA), and 506–528 (SVAYATVYPIAMVFLILFIQVIS).

Belongs to the AAE transporter (TC 2.A.81) family.

It localises to the cell membrane. This is an uncharacterized protein from Bacteroides thetaiotaomicron (strain ATCC 29148 / DSM 2079 / JCM 5827 / CCUG 10774 / NCTC 10582 / VPI-5482 / E50).